The sequence spans 605 residues: MEHHKHDTFLGGIVKALGLVFGDIGTSPIYTLTVIFTLTQPTIDNVYGILSLIFWTMTILVSAEYAWLAMSLGRKGQGGEIVLREIIMKLVKAGRLVAFAGFLSFVGVSLLLGDAVITPAISILSAVEGLLLIPGLEGLSTGALVAIAAAIAIGLFSVQHKGTDRVASAFGPIMALWFGTLAVTGAVSAFSMPQIVEAINPLHGIAFFRDNGLAGYFVLSEVILCATGGEALYADMGHLGKRPIVRAWHFVFVALYLNYLGQGVFAIAHPDAKNLLFGMVRSQAPALYIPFLILTIMATIIASQAIISGVFSIVYQGITTRLLPLMRVDYTSRQIKSQIYLGAVNWSLMVAVIFIMLVFRKSENLAAAYGMAVTGSMTITGIMMIIVFSHTTKKWRALVALVVTLIAAAYHVSTFSKLPHGAYWSIILASIPFVTIIIWTRGQRTLYRALKPLDLETFLISYEQIYAKGPIRGTGLFFTRETDVVPPYVVHCIIRSNIIYERNVFISLMISDEPLGVETELIRGIGPGLDAFRIEAGYMEMVDIERLLKENGIQEKVIFYGVEDISTRNPFWRFFSVLKKLTPNFVQFHKLPASRLQGVVTRVEM.

12 helical membrane-spanning segments follow: residues 16–36 (ALGLVFGDIGTSPIYTLTVIF), 49–69 (ILSLIFWTMTILVSAEYAWLA), 97–117 (VAFAGFLSFVGVSLLLGDAVI), 138–158 (GLSTGALVAIAAAIAIGLFSV), 170–190 (FGPIMALWFGTLAVTGAVSAF), 212–232 (GLAGYFVLSEVILCATGGEAL), 247–267 (AWHFVFVALYLNYLGQGVFAI), 287–307 (LYIPFLILTIMATIIASQAII), 339–359 (IYLGAVNWSLMVAVIFIMLVF), 368–388 (AYGMAVTGSMTITGIMMIIVF), 397–417 (ALVALVVTLIAAAYHVSTFSK), and 418–438 (LPHGAYWSIILASIPFVTIII).

This sequence belongs to the HAK/KUP transporter (TC 2.A.72) family.

The protein resides in the cell inner membrane. The catalysed reaction is K(+)(in) + H(+)(in) = K(+)(out) + H(+)(out). Its function is as follows. Transport of potassium into the cell. Likely operates as a K(+):H(+) symporter. This Geobacter sulfurreducens (strain ATCC 51573 / DSM 12127 / PCA) protein is Probable potassium transport system protein Kup 3.